The primary structure comprises 253 residues: Matrix protein (253 aa).

The segment at 1 to 26 (MLSRIKQGIKTKRSSSSSSSRSKTGD) is disordered. The PTAP/PSAP motif signature appears at 55-58 (PTAP).

In terms of assembly, homomultimer. Interacts with viral nucleocapsid. Interacts with host TSG101.

It is found in the virion membrane. The protein localises to the host endomembrane system. Its subcellular location is the host nucleus membrane. Plays a major role in assembly and budding of virion, by recruiting cellular partners of the ESCRT complexes that play a key role in releasing the budding particle from the host membrane. Condensates the ribonucleocapsid core during virus assembly. This chain is Matrix protein (M), found in Bos taurus (Bovine).